Reading from the N-terminus, the 312-residue chain is MGKSKVLIIGGTGYLGRRLVKASLAQGHETYILHRPEIGVDIDKVEMLISFKMQGAHLVSGSFKDFNSLVEAVKLVDVVISAISGVHIRSHQILLQLKLVEAIKEAGNVKRFLPSEFGMDPAKFMDTAMEPGKVTLDEKMVVRKAIEKAGIPFTYVSANCFAGYFLGGLCQFGKILPSRDFVIIHGDGNKKAIYNNEDDIATYAIKTINDPRTLNKTIYISPPKNILSQREVVQTWEKLIGKELQKITLSKEDFLASVKELEYAQQVGLSHYHDVNYQGCLTSFEIGDEEEASKLYPEVKYTSVEEYLKRYV.

Residues 10-16 (GGTGYLG), Arg35, and Lys44 contribute to the NADP(+) site. The active-site Proton acceptor is the Lys139. An NADP(+)-binding site is contributed by Arg143. Substrate is bound at residue His271.

It belongs to the NmrA-type oxidoreductase family. Isoflavone reductase subfamily. Dimer. Expressed in young stems, young roots and petioles. In stems, expressed in radial parenchyma cells and in the cambial cells of developing secondary xylem.

The catalysed reaction is (+)-lariciresinol + NADP(+) = (+)-pinoresinol + NADPH + H(+). It catalyses the reaction (-)-secoisolariciresinol + NADP(+) = (+)-lariciresinol + NADPH + H(+). Reductase involved in lignan biosynthesis. Catalyzes the enantioselective sequential conversion of (+)-pinoresinol into (+)-lariciresinol and of (+)-lariciresinol into (-)-secoisolariciresinol. Abstracts the 4R-hydride from the NADPH cofactor during catalysis. This is Bifunctional pinoresinol-lariciresinol reductase (PLR_Fi1) from Forsythia intermedia (Border forsythia).